The primary structure comprises 263 residues: Ribonuclease HII (263 aa).

Residues 71-262 (QAIAGIDEVG…VKSMCCDSTN (192 aa)) form the RNase H type-2 domain. The a divalent metal cation site is built by Asp77, Glu78, and Asp172.

This sequence belongs to the RNase HII family. It depends on Mn(2+) as a cofactor. Requires Mg(2+) as cofactor.

It localises to the cytoplasm. The catalysed reaction is Endonucleolytic cleavage to 5'-phosphomonoester.. Functionally, endonuclease that specifically degrades the RNA of RNA-DNA hybrids. This Streptococcus pyogenes serotype M3 (strain ATCC BAA-595 / MGAS315) protein is Ribonuclease HII.